The sequence spans 469 residues: Glutamate--tRNA ligase 2 (469 aa).

The 'HIGH' region signature appears at 8-18 (PSPTGFLHVGG). Positions 250–254 (KLSKR) match the 'KMSKS' region motif. Residue Lys253 coordinates ATP.

The protein belongs to the class-I aminoacyl-tRNA synthetase family. Glutamate--tRNA ligase type 1 subfamily. In terms of assembly, monomer.

The protein resides in the cytoplasm. The catalysed reaction is tRNA(Glu) + L-glutamate + ATP = L-glutamyl-tRNA(Glu) + AMP + diphosphate. In terms of biological role, catalyzes the attachment of glutamate to tRNA(Glu) in a two-step reaction: glutamate is first activated by ATP to form Glu-AMP and then transferred to the acceptor end of tRNA(Glu). The polypeptide is Glutamate--tRNA ligase 2 (Thermotoga petrophila (strain ATCC BAA-488 / DSM 13995 / JCM 10881 / RKU-1)).